Here is a 428-residue protein sequence, read N- to C-terminus: Tyrosine--tRNA ligase (428 aa).

Y34 contributes to the L-tyrosine binding site. A 'HIGH' region motif is present at residues 39–48; the sequence is PTADSLHIGH. Positions 171 and 175 each coordinate L-tyrosine. The short motif at 236-240 is the 'KMSKS' region element; it reads KFGKT. Position 239 (K239) interacts with ATP. An S4 RNA-binding domain is found at 358–424; sequence VGLIDLLVDA…GKKKYFLIQV (67 aa).

This sequence belongs to the class-I aminoacyl-tRNA synthetase family. TyrS type 1 subfamily. Homodimer.

Its subcellular location is the cytoplasm. It carries out the reaction tRNA(Tyr) + L-tyrosine + ATP = L-tyrosyl-tRNA(Tyr) + AMP + diphosphate + H(+). Its function is as follows. Catalyzes the attachment of tyrosine to tRNA(Tyr) in a two-step reaction: tyrosine is first activated by ATP to form Tyr-AMP and then transferred to the acceptor end of tRNA(Tyr). This chain is Tyrosine--tRNA ligase, found in Oceanobacillus iheyensis (strain DSM 14371 / CIP 107618 / JCM 11309 / KCTC 3954 / HTE831).